A 756-amino-acid chain; its full sequence is ATP-dependent zinc metalloprotease FtsH (756 aa).

Topologically, residues 1-44 (MGVPAGMPHPNGLQPQRKDKALAQNPNTPQKGSEAFLKKLIHSS) are cytoplasmic. The helical transmembrane segment at 45 to 65 (WFFPGAAIVVMLGFLMASFFT) threads the bilayer. Over 66–148 (QPSRQVDTNV…SYTDQPVEHS (83 aa)) the chain is Extracellular. A helical membrane pass occupies residues 149-169 (FLGSLVSLLLPILLFGVLFWF). Topologically, residues 170-756 (LMGRVGGGSS…NQNGAENERG (587 aa)) are cytoplasmic. 241 to 248 (GPPGTGKT) provides a ligand contact to ATP. Histidine 463 is a binding site for Zn(2+). The active site involves glutamate 464. Zn(2+) is bound by residues histidine 467 and aspartate 539. Basic and acidic residues-rich tracts occupy residues 647 to 662 (PERE…ERTD) and 672 to 681 (LAKEAEKSEE). Positions 647–756 (PEREHWYSKP…NQNGAENERG (110 aa)) are disordered. 2 stretches are compositionally biased toward low complexity: residues 684 to 703 (AEAP…VPVA) and 713 to 724 (PLTDPDADPTVA). The segment covering 744–756 (GTPNQNGAENERG) has biased composition (polar residues).

In the central section; belongs to the AAA ATPase family. This sequence in the C-terminal section; belongs to the peptidase M41 family. Homohexamer. Zn(2+) serves as cofactor.

The protein localises to the cell membrane. Functionally, acts as a processive, ATP-dependent zinc metallopeptidase for both cytoplasmic and membrane proteins. Plays a role in the quality control of integral membrane proteins. The polypeptide is ATP-dependent zinc metalloprotease FtsH (Rothia mucilaginosa (strain DY-18) (Stomatococcus mucilaginosus)).